The chain runs to 163 residues: MVKKKSSKAAPATIARNKRATFEYRFEEKMEAGLSLMGWEVKSIRMGKVNLSDCYVFLKNGEAFMHGCTIIPLNTASTHVVCDPLRLKKLLLSRKELDKLAGLVERQGYSIIPISMYWRKGAWVKVEIGLGKGKKDHDKREDTKAREWEVEKARVMKKEKTHG.

This sequence belongs to the SmpB family.

Its subcellular location is the cytoplasm. In terms of biological role, required for rescue of stalled ribosomes mediated by trans-translation. Binds to transfer-messenger RNA (tmRNA), required for stable association of tmRNA with ribosomes. tmRNA and SmpB together mimic tRNA shape, replacing the anticodon stem-loop with SmpB. tmRNA is encoded by the ssrA gene; the 2 termini fold to resemble tRNA(Ala) and it encodes a 'tag peptide', a short internal open reading frame. During trans-translation Ala-aminoacylated tmRNA acts like a tRNA, entering the A-site of stalled ribosomes, displacing the stalled mRNA. The ribosome then switches to translate the ORF on the tmRNA; the nascent peptide is terminated with the 'tag peptide' encoded by the tmRNA and targeted for degradation. The ribosome is freed to recommence translation, which seems to be the essential function of trans-translation. This is SsrA-binding protein from Shewanella putrefaciens (strain CN-32 / ATCC BAA-453).